Reading from the N-terminus, the 57-residue chain is uncharacterized protein (57 aa).

Residues 34–57 (QGKRGETEGQIEISRKAGHPAPAF) form a disordered region.

This is an uncharacterized protein from Saccharomyces cerevisiae (strain ATCC 204508 / S288c) (Baker's yeast).